A 128-amino-acid chain; its full sequence is Platelet basic protein (128 aa).

The N-terminal stretch at 1-34 (MSLRLDTTPSCNSARPLHALQVLLLLSLLLTALA) is a signal peptide. 2 disulfides stabilise this stretch: Cys-63-Cys-89 and Cys-65-Cys-105.

Belongs to the intercrine alpha (chemokine CxC) family. In terms of assembly, beta-thromboglobulin is a homotetramer. Post-translationally, proteolytic removal of residues 1-9 produces the active peptide connective tissue-activating peptide III (CTAP-III) (low-affinity platelet factor IV (LA-PF4)). Proteolytic removal of residues 1-13 produces the active peptide beta-thromboglobulin, which is released from platelets along with platelet factor 4 and platelet-derived growth factor. In terms of processing, NAP-2(1-66) is produced by proteolytical processing, probably after secretion by leukocytes other than neutrophils. Post-translationally, NAP-2(73) and NAP-2(74) seem not be produced by proteolytical processing of secreted precursors but are released in an active form from platelets.

The protein localises to the secreted. In terms of biological role, LA-PF4 stimulates DNA synthesis, mitosis, glycolysis, intracellular cAMP accumulation, prostaglandin E2 secretion, and synthesis of hyaluronic acid and sulfated glycosaminoglycan. It also stimulates the formation and secretion of plasminogen activator by human synovial cells. NAP-2 is a ligand for CXCR1 and CXCR2, and NAP-2, NAP-2(73), NAP-2(74), NAP-2(1-66), and most potent NAP-2(1-63) are chemoattractants and activators for neutrophils. TC-1 and TC-2 are antibacterial proteins, in vitro released from activated platelet alpha-granules. CTAP-III(1-81) is more potent than CTAP-III desensitize chemokine-induced neutrophil activation. The chain is Platelet basic protein (PPBP) from Homo sapiens (Human).